Here is an 89-residue protein sequence, read N- to C-terminus: DNA/RNA-binding protein Alba (89 aa).

Belongs to the histone-like Alba family.

The protein localises to the cytoplasm. It localises to the chromosome. In terms of biological role, binds double-stranded DNA tightly but without sequence specificity. Involved in DNA compaction. This is DNA/RNA-binding protein Alba from Methanothrix thermoacetophila (strain DSM 6194 / JCM 14653 / NBRC 101360 / PT) (Methanosaeta thermophila).